The sequence spans 324 residues: Beta-ketoacyl-[acyl-carrier-protein] synthase III (324 aa).

Active-site residues include C114 and H246. The tract at residues 247–251 (QANLR) is ACP-binding. The active site involves N276.

The protein belongs to the thiolase-like superfamily. FabH family. In terms of assembly, homodimer.

It localises to the cytoplasm. The catalysed reaction is malonyl-[ACP] + acetyl-CoA + H(+) = 3-oxobutanoyl-[ACP] + CO2 + CoA. The protein operates within lipid metabolism; fatty acid biosynthesis. Catalyzes the condensation reaction of fatty acid synthesis by the addition to an acyl acceptor of two carbons from malonyl-ACP. Catalyzes the first condensation reaction which initiates fatty acid synthesis and may therefore play a role in governing the total rate of fatty acid production. Possesses both acetoacetyl-ACP synthase and acetyl transacylase activities. Its substrate specificity determines the biosynthesis of branched-chain and/or straight-chain of fatty acids. This is Beta-ketoacyl-[acyl-carrier-protein] synthase III from Campylobacter jejuni subsp. jejuni serotype O:6 (strain 81116 / NCTC 11828).